The chain runs to 238 residues: Accessory gene regulator A (238 aa).

The Response regulatory domain occupies 2 to 125 (KIFICEDDPK…LRTRIIDCLE (124 aa)). Asp59 carries the post-translational modification 4-aspartylphosphate. Residues 143 to 238 (IELKRGSNSV…YASVRNVKKK (96 aa)) enclose the HTH LytTR-type domain.

The protein localises to the cytoplasm. Its function is as follows. Required for high-level post-exponential phase expression of a series of secreted proteins. The sequence is that of Accessory gene regulator A (agrA) from Staphylococcus aureus (strain Mu50 / ATCC 700699).